The chain runs to 150 residues: Urease accessory protein UreE (150 aa).

The protein belongs to the UreE family.

It is found in the cytoplasm. Functionally, involved in urease metallocenter assembly. Binds nickel. Probably functions as a nickel donor during metallocenter assembly. The sequence is that of Urease accessory protein UreE from Staphylococcus epidermidis (strain ATCC 35984 / DSM 28319 / BCRC 17069 / CCUG 31568 / BM 3577 / RP62A).